Consider the following 126-residue polypeptide: Methylglyoxal synthase (126 aa).

The region spanning 1–126 is the MGS-like domain; the sequence is MAGGKCIALI…AERLIKTLNH (126 aa). Residues histidine 12, lysine 16, 38 to 41, and 59 to 60 each bind substrate; these read TGTT and SG. Catalysis depends on aspartate 65, which acts as the Proton donor/acceptor. Position 92 (histidine 92) interacts with substrate.

Belongs to the methylglyoxal synthase family.

It catalyses the reaction dihydroxyacetone phosphate = methylglyoxal + phosphate. In terms of biological role, catalyzes the formation of methylglyoxal from dihydroxyacetone phosphate. The protein is Methylglyoxal synthase of Rhizobium rhizogenes (strain K84 / ATCC BAA-868) (Agrobacterium radiobacter).